The sequence spans 460 residues: Kynurenine 3-monooxygenase (460 aa).

FAD-binding positions include V13, 32-34, and A53; that span reads DFR. 2 residues coordinate L-kynurenine: R83 and Y97. FAD is bound by residues R109, L133, Y195, D314, and 325–328; that span reads QGMN. L-kynurenine-binding residues include N373 and Y408.

Belongs to the aromatic-ring hydroxylase family. KMO subfamily. The cofactor is FAD.

It localises to the mitochondrion outer membrane. It catalyses the reaction L-kynurenine + NADPH + O2 + H(+) = 3-hydroxy-L-kynurenine + NADP(+) + H2O. It participates in cofactor biosynthesis; NAD(+) biosynthesis; quinolinate from L-kynurenine: step 1/3. In terms of biological role, catalyzes the hydroxylation of L-kynurenine (L-Kyn) to form 3-hydroxy-L-kynurenine (L-3OHKyn). Required for synthesis of quinolinic acid. This chain is Kynurenine 3-monooxygenase, found in Saccharomyces cerevisiae (strain ATCC 204508 / S288c) (Baker's yeast).